A 359-amino-acid polypeptide reads, in one-letter code: tRNA-specific 2-thiouridylase MnmA (359 aa).

ATP-binding positions include Gly-7–Ser-14 and Leu-33. The Nucleophile role is filled by Cys-94. A disulfide bridge links Cys-94 with Cys-193. ATP is bound at residue Gly-119. Positions Lys-143 to Gln-145 are interaction with tRNA. The active-site Cysteine persulfide intermediate is Cys-193. The segment at Arg-298–Tyr-299 is interaction with tRNA.

Belongs to the MnmA/TRMU family.

The protein resides in the cytoplasm. The catalysed reaction is S-sulfanyl-L-cysteinyl-[protein] + uridine(34) in tRNA + AH2 + ATP = 2-thiouridine(34) in tRNA + L-cysteinyl-[protein] + A + AMP + diphosphate + H(+). Functionally, catalyzes the 2-thiolation of uridine at the wobble position (U34) of tRNA, leading to the formation of s(2)U34. In Trichodesmium erythraeum (strain IMS101), this protein is tRNA-specific 2-thiouridylase MnmA.